The sequence spans 723 residues: Delta-like protein 1 (723 aa).

The N-terminal stretch at 1–17 (MGSRCALALAVLSALLC) is a signal peptide. The Extracellular portion of the chain corresponds to 18 to 545 (QVWSSGVFEL…LEGQGGPFPW (528 aa)). The region spanning 177 to 221 (FVCDEHYYGEGCSVFCRPRDDAFGHFTCGERGEKVCNPGWKGPYC) is the DSL domain. Disulfide bonds link C179-C188, C192-C204, C212-C221, C226-C237, C230-C243, C245-C254, C257-C268, C263-C274, C276-C285, C292-C304, C298-C314, C316-C325, C332-C343, C337-C352, C354-C363, C370-C381, C375-C391, C393-C402, C409-C420, C414-C429, C431-C440, C447-C458, C452-C467, C469-C478, C485-C496, C490-C505, and C507-C516. 3 consecutive EGF-like domains span residues 226 to 254 (CLPG…GRYC), 257 to 285 (CIRY…GLFC), and 292 to 325 (CTHH…GATC). The 32-residue stretch at 332 to 363 (CDPSPCKNGGSCTDLENSYSCTCPPGFYGKIC) folds into the EGF-like 4; calcium-binding domain. 2 EGF-like domains span residues 370 to 402 (CADG…GFNC) and 409 to 440 (CSSS…GRHC). Positions 447–478 (CASSPCANGGTCRDGVNDFSCTCPPGYTGRNC) constitute an EGF-like 7; calcium-binding domain. Residue N477 is glycosylated (N-linked (GlcNAc...) asparagine). The 32-residue stretch at 485–516 (CEHAPCHNGATCHERGHRYVCECARGYGGPNC) folds into the EGF-like 8 domain. A helical membrane pass occupies residues 546-568 (VAVCAGVILVLMLLLGCAAVVVC). Residues 569-723 (VRLRLQKHRP…KDECVIATEV (155 aa)) are Cytoplasmic-facing. K613 participates in a covalent cross-link: Glycyl lysine isopeptide (Lys-Gly) (interchain with G-Cter in ubiquitin). Basic and acidic residues predominate over residues 653-664 (AVRDAHSKRDTK). Residues 653-702 (AVRDAHSKRDTKCQPQGSSGEEKGTPTTLRGGEASERKRPDSGCSTSKDT) are disordered. The residue at position 694 (S694) is a Phosphoserine; by PKB. S697 bears the Phosphoserine mark. An interaction with MAGI1 region spans residues 720–723 (ATEV).

In terms of assembly, homodimer. Interacts with TJP1. Interacts with MAGI1 (via PDZ domain); forms a complex with CTNNB1 and CDH2 and promotes recruitment to the adherens junction and stabilization on the cell surface. Interacts with PSEN1; undergoes a presenilin-dependent gamma-secretase cleavage that releases a Dll1-intracellular form. Interacts with MFAP5. Interacts with MIB1. Interacts with NEURL1B; leads to ubiquitination. Interacts with NEURL1. Interacts with SYNJ2BP; enhances DLL1 protein stability, and promotes Notch signaling in endothelial cells. Interacts with MAGI1, MAGI2, MAGI3 and MPDZ. Interacts (via ubiquitin) with EPN1 (via IUM domain); binding with NOTCH1 attached to neighboring cell, promotes ligand ubiquitination and EPN1 interaction, leading to NECD transendocytosis and Notch signaling. Interacts with NOTCH1. Interacts with NOTCH2NLB; leading to promote Notch signaling pathway in a cell-autonomous manner through inhibition of cis DLL1-NOTCH2 interactions. Post-translationally, ubiquitinated by MIB (MIB1 or MIB2), leading to its endocytosis and subsequent degradation. Ubiquitinated; promotes recycling back to the plasma membrane and confers a strong affinity for NOTCH1. Multi-ubiquitination of Lys-613 by MIB1 promotes both cis and trans-interaction with NOTCH1, as well as activation of Notch signaling. Ubiquitinated by NEURL1B. In terms of processing, phosphorylated in a membrane association-dependent manner. Phosphorylation at Ser-697 requires the presence of Ser-694, whereas phosphorylation at Ser-694 occurs independently of the other site. Phosphorylation is required for full ligand activity in vitro and affects surface presentation, ectodomain shedding, and endocytosis. O-fucosylated. Can be elongated to a disaccharide by MFNG. Expressed in heart and pancreas, with lower expression in brain and muscle and almost no expression in placenta, lung, liver and kidney.

It localises to the apical cell membrane. The protein localises to the cell junction. Its subcellular location is the adherens junction. It is found in the membrane raft. Transmembrane ligand protein of NOTCH1, NOTCH2 and NOTCH3 receptors that binds the extracellular domain (ECD) of Notch receptor in a cis and trans fashion manner. Following transinteraction, ligand cells produce mechanical force that depends of a clathrin-mediated endocytosis, requiring ligand ubiquitination, EPN1 interaction, and actin polymerisation; these events promote Notch receptor extracellular domain (NECD) transendocytosis and triggers Notch signaling through induction of cleavage, hyperphosphorylation, and nuclear accumulation of the intracellular domain of Notch receptors (NICD). Is required for embryonic development and maintenance of adult stem cells in many different tissues and immune systeme; the DLL1-induced Notch signaling is mediated through an intercellular communication that regulates cell lineage, cell specification, cell patterning and morphogenesis through effects on differentiation and proliferation. Plays a role in brain development at different level, namely by regulating neuronal differentiation of neural precursor cells via cell-cell interaction, most likely through the lateral inhibitory system in an endogenous level dependent-manner. During neocortex development, Dll1-Notch signaling transmission is mediated by dynamic interactions between intermediate neurogenic progenitors and radial glia; the cell-cell interactions are mediated via dynamic and transient elongation processes, likely to reactivate/maintain Notch activity in neighboring progenitors, and coordinate progenitor cell division and differentiation across radial and zonal boundaries. During cerebellar development, regulates Bergmann glial monolayer formation and its morphological maturation through a Notch signaling pathway. At the retina and spinal cord level, regulates neurogenesis by preventing the premature differentiation of neural progenitors and also by maintaining progenitors in spinal cord through Notch signaling pathway. Also controls neurogenesis of the neural tube in a progenitor domain-specific fashion along the dorsoventral axis. Maintains quiescence of neural stem cells and plays a role as a fate determinant that segregates asymmetrically to one daughter cell during neural stem cells mitosis, resulting in neuronal differentiation in Dll1-inheriting cell. Plays a role in immune systeme development, namely the development of all T-cells and marginal zone (MZ) B-cells. Blocks the differentiation of progenitor cells into the B-cell lineage while promoting the emergence of a population of cells with the characteristics of a T-cell/NK-cell precursor. Also plays a role during muscle development. During early development, inhibits myoblasts differentiation from the medial dermomyotomal lip and later regulates progenitor cell differentiation. Directly modulates cell adhesion and basal lamina formation in satellite cells through Notch signaling. Maintains myogenic progenitors pool by suppressing differentiation through down-regulation of MYOD1 and is required for satellite cell homing and PAX7 expression. During craniofacial and trunk myogenesis suppresses differentiation of cranial mesoderm-derived and somite-derived muscle via MYOD1 regulation but in cranial mesoderm-derived progenitors, is neither required for satellite cell homing nor for PAX7 expression. Also plays a role during pancreatic cell development. During type B pancreatic cell development, may be involved in the initiation of proximodistal patterning in the early pancreatic epithelium. Stimulates multipotent pancreatic progenitor cells proliferation and pancreatic growth by maintaining HES1 expression and PTF1A protein levels. During fetal stages of development, is required to maintain arterial identity and the responsiveness of arterial endothelial cells for VEGFA through regulation of KDR activation and NRP1 expression. Controls sprouting angiogenesis and subsequent vertical branch formation through regulation on tip cell differentiation. Negatively regulates goblet cell differentiation in intestine and controls secretory fat commitment through lateral inhibition in small intestine. Plays a role during inner ear development; negatively regulates auditory hair cell differentiation. Plays a role during nephron development through Notch signaling pathway. Regulates growth, blood pressure and energy homeostasis. This is Delta-like protein 1 from Homo sapiens (Human).